The chain runs to 2552 residues: Protein TIC 214 (2552 aa).

A run of 6 helical transmembrane segments spans residues Leu15 to Phe35, Leu54 to Phe74, Leu78 to Trp98, Thr119 to Phe136, Phe154 to Ile174, and Ile243 to Phe263. Residues Glu304–Asn325 form a disordered region. Positions Glu305–Glu322 are enriched in basic and acidic residues. The next 3 membrane-spanning stretches (helical) occupy residues Thr362–Phe382, Pro423–Ile443, and Phe452–Phe472. Positions Met2045–Glu2077 are disordered. A coiled-coil region spans residues Arg2416–Phe2511.

Belongs to the TIC214 family. In terms of assembly, part of the Tic complex.

Its subcellular location is the plastid. The protein localises to the chloroplast inner membrane. Its function is as follows. Involved in protein precursor import into chloroplasts. May be part of an intermediate translocation complex acting as a protein-conducting channel at the inner envelope. The sequence is that of Protein TIC 214 from Pelargonium hortorum (Common geranium).